The primary structure comprises 156 residues: Arginine repressor (156 aa).

This sequence belongs to the ArgR family.

Its subcellular location is the cytoplasm. Its pathway is amino-acid biosynthesis; L-arginine biosynthesis [regulation]. In terms of biological role, regulates arginine biosynthesis genes. The protein is Arginine repressor of Shewanella baltica (strain OS223).